Consider the following 635-residue polypeptide: Chaperone protein HtpG (635 aa).

The a; substrate-binding stretch occupies residues 1 to 346 (MSQTTTNSAS…SADLPLNVSR (346 aa)). Residues 347–563 (EILQESRDVR…QNELSPHLLR (217 aa)) are b. Positions 564–635 (MLKAAGQEAP…KRLNGLLLKA (72 aa)) are c.

Belongs to the heat shock protein 90 family. As to quaternary structure, homodimer.

Its subcellular location is the cytoplasm. In terms of biological role, molecular chaperone. Has ATPase activity. The chain is Chaperone protein HtpG from Bordetella parapertussis (strain 12822 / ATCC BAA-587 / NCTC 13253).